Here is a 90-residue protein sequence, read N- to C-terminus: MAHKKAGGSSRNGRDSAGKRLGVKAFGGEHVIPGNIIARQRGTTWHPGLNVGMGTDHTLFAKVEGRVEFRAKAGGRTFVSVLPMTEAAAE.

The tract at residues 1-20 (MAHKKAGGSSRNGRDSAGKR) is disordered.

Belongs to the bacterial ribosomal protein bL27 family.

The sequence is that of Large ribosomal subunit protein bL27 from Nitrobacter hamburgensis (strain DSM 10229 / NCIMB 13809 / X14).